A 609-amino-acid polypeptide reads, in one-letter code: Snake venom metalloproteinase-disintegrin-like mocarhagin (609 aa).

Residues 1–20 form the signal peptide; the sequence is MIQALLVAICLAVFPYQGSS. A propeptide spanning residues 21–191 is cleaved from the precursor; the sequence is IILESGNVND…DEPIEKSSQL (171 aa). The 196-residue stretch at 205-400 folds into the Peptidase M12B domain; the sequence is KYIEFYVVVD…DRPQCILNKP (196 aa). 2 residues coordinate Ca(2+): glutamate 208 and aspartate 292. Asparagine 303 is a glycosylation site (N-linked (GlcNAc...) asparagine). Disulfide bonds link cysteine 316–cysteine 395, cysteine 356–cysteine 379, and cysteine 358–cysteine 363. Zn(2+)-binding residues include histidine 341 and histidine 345. Ca(2+) is bound by residues cysteine 395, asparagine 398, valine 410, asparagine 413, phenylalanine 415, glutamate 417, glutamate 420, and aspartate 423. Residues 408–494 form the Disintegrin domain; the sequence is PPVCGNYFVE…KCPKDSFQRN (87 aa). Intrachain disulfides connect cysteine 411–cysteine 440, cysteine 422–cysteine 435, cysteine 424–cysteine 430, cysteine 434–cysteine 457, cysteine 448–cysteine 454, cysteine 453–cysteine 479, cysteine 466–cysteine 486, cysteine 473–cysteine 505, cysteine 498–cysteine 510, cysteine 517–cysteine 567, cysteine 532–cysteine 575, cysteine 545–cysteine 555, cysteine 562–cysteine 601, and cysteine 595–cysteine 606. Positions 472 to 474 match the D/ECD-tripeptide motif; that stretch reads DCD. Asparagine 507 carries an N-linked (GlcNAc...) asparagine glycan.

This sequence belongs to the venom metalloproteinase (M12B) family. P-III subfamily. P-IIIa sub-subfamily. As to quaternary structure, monomer. It depends on Zn(2+) as a cofactor. In terms of tissue distribution, expressed by the venom gland.

It localises to the secreted. Inhibited by EDTA and diisopropyl fluorophosphate (DFP). Also inhibited by an excess of zinc or calcium ions. Functionally, snake venom zinc metalloproteinase that inhibits platelet aggregation by cleaving platelet glycoprotein Ib alpha (GP1BA) at Glu-298/Asp-299, and abolishes binding of von Willebrand factor (VWF) to GPIBA. Cleaves P-selectin glycoprotein ligand-1 (PSGL-1/SELPLG) at Tyr-51/Asp-52, and completely abolishes the binding of PSGL-1 to P-selectin. Anionic amino acid sequences containing sulfated tyrosines are needed for cleavages. Inhibits the thrombin-induced platelet aggregation, and the thrombin-induced release of ATP and ADP. Has lectin activity (inhibited by heparin). This Naja mossambica (Mozambique spitting cobra) protein is Snake venom metalloproteinase-disintegrin-like mocarhagin.